Here is a 273-residue protein sequence, read N- to C-terminus: Urease accessory protein UreD (273 aa).

It belongs to the UreD family. In terms of assembly, ureD, UreF and UreG form a complex that acts as a GTP-hydrolysis-dependent molecular chaperone, activating the urease apoprotein by helping to assemble the nickel containing metallocenter of UreC. The UreE protein probably delivers the nickel.

Its subcellular location is the cytoplasm. Its function is as follows. Required for maturation of urease via the functional incorporation of the urease nickel metallocenter. In Rhizobium rhizogenes (strain K84 / ATCC BAA-868) (Agrobacterium radiobacter), this protein is Urease accessory protein UreD.